We begin with the raw amino-acid sequence, 60 residues long: DNA-directed RNA polymerase subunit Rpo6 (60 aa).

Belongs to the archaeal Rpo6/eukaryotic RPB6 RNA polymerase subunit family. Part of the RNA polymerase complex.

The protein resides in the cytoplasm. It catalyses the reaction RNA(n) + a ribonucleoside 5'-triphosphate = RNA(n+1) + diphosphate. Its function is as follows. DNA-dependent RNA polymerase (RNAP) catalyzes the transcription of DNA into RNA using the four ribonucleoside triphosphates as substrates. This is DNA-directed RNA polymerase subunit Rpo6 from Halobacterium salinarum (strain ATCC 700922 / JCM 11081 / NRC-1) (Halobacterium halobium).